Reading from the N-terminus, the 361-residue chain is Peptide chain release factor 1 (361 aa).

An N5-methylglutamine modification is found at Gln-236. Residues Thr-285–Arg-309 show a composition bias toward basic and acidic residues. The disordered stretch occupies residues Thr-285–Phe-313.

The protein belongs to the prokaryotic/mitochondrial release factor family. In terms of processing, methylated by PrmC. Methylation increases the termination efficiency of RF1.

The protein resides in the cytoplasm. Peptide chain release factor 1 directs the termination of translation in response to the peptide chain termination codons UAG and UAA. This Methylorubrum populi (strain ATCC BAA-705 / NCIMB 13946 / BJ001) (Methylobacterium populi) protein is Peptide chain release factor 1.